Reading from the N-terminus, the 602-residue chain is MDSRVSGTTSNGETKPVYPVMEKKEEDGTLERGHWNNKMEFVLSVAGEIIGLGNVWRFPYLCYKNGGGAFFIPYLVFLFTCGIPVFLLETALGQYTSQGGVTAWRKICPIFEGIGYASQMIVILLNVYYIIVLAWALFYLFSSFTIDLPWGGCYHEWNTEHCMEFQKTNGSLNGTSENATSPVIEFWERRVLKISDGIQHLGALRWELALCLLLAWVICYFCIWKGVKSTGKVVYFTATFPYLMLVVLLIRGVTLPGAAQGIQFYLYPNLTRLWDPQVWMDAGTQIFFSFAICLGCLTALGSYNKYHNNCYRDCIALCFLNSGTSFVAGFAIFSILGFMSQEQGVPISEVAESGPGLAFIAYPRAVVMLPFSPLWACCFFFMVVLLGLDSQFVCVESLVTALVDMYPHVFRKKNRREVLILGVSVVSFLVGLIMLTEGGMYVFQLFDYYAASGMCLLFVAIFESLCVAWVYGAKRFYDNIEDMIGYRPWPLIKYCWLFLTPAVCTATFLFSLIKYTPLTYNKKYTYPWWGDALGWLLALSSMVCIPAWSLYRLGTLKGPFRERIRQLMCPAEDLPQRNPAGPSAPATPRTSLLRLTELESHC.

Residues 1–13 are compositionally biased toward polar residues; the sequence is MDSRVSGTTSNGE. The tract at residues 1–22 is disordered; it reads MDSRVSGTTSNGETKPVYPVME. Topologically, residues 1–40 are cytoplasmic; it reads MDSRVSGTTSNGETKPVYPVMEKKEEDGTLERGHWNNKME. 3 consecutive transmembrane segments (helical) span residues 41 to 61, 68 to 88, and 121 to 141; these read FVLSVAGEIIGLGNVWRFPYL, GAFFIPYLVFLFTCGIPVFLL, and IVILLNVYYIIVLAWALFYLF. The Extracellular segment spans residues 142-206; the sequence is SSFTIDLPWG…GIQHLGALRW (65 aa). Cysteine 153 and cysteine 162 form a disulfide bridge. An N-linked (GlcNAc...) asparagine glycan is attached at asparagine 173. 2 consecutive transmembrane segments (helical) span residues 207 to 227 and 233 to 253; these read ELALCLLLAWVICYFCIWKGV and VVYFTATFPYLMLVVLLIRGV. An N-linked (GlcNAc...) asparagine glycan is attached at asparagine 269. 7 helical membrane passes run 282 to 302, 319 to 339, 366 to 386, 418 to 438, 453 to 473, 490 to 510, and 528 to 548; these read AGTQIFFSFAICLGCLTALGS, FLNSGTSFVAGFAIFSILGFM, VVMLPFSPLWACCFFFMVVLL, VLILGVSVVSFLVGLIMLTEG, GMCLLFVAIFESLCVAWVYGA, PLIKYCWLFLTPAVCTATFLF, and WWGDALGWLLALSSMVCIPAW. The Cytoplasmic segment spans residues 549-602; the sequence is SLYRLGTLKGPFRERIRQLMCPAEDLPQRNPAGPSAPATPRTSLLRLTELESHC. Threonine 587 carries the post-translational modification Phosphothreonine. Serine 591 carries the post-translational modification Phosphoserine.

The protein belongs to the sodium:neurotransmitter symporter (SNF) (TC 2.A.22) family. SLC6A13 subfamily. In terms of tissue distribution, expressed in brain, kidney, lung, liver and testis.

It localises to the cell membrane. Its subcellular location is the basolateral cell membrane. It catalyses the reaction 4-aminobutanoate(out) + chloride(out) + 2 Na(+)(out) = 4-aminobutanoate(in) + chloride(in) + 2 Na(+)(in). It carries out the reaction taurine(out) + chloride(out) + 2 Na(+)(out) = taurine(in) + chloride(in) + 2 Na(+)(in). The catalysed reaction is beta-alanine(out) + chloride(out) + 2 Na(+)(out) = beta-alanine(in) + chloride(in) + 2 Na(+)(in). The enzyme catalyses hypotaurine(out) + chloride(out) + 2 Na(+)(out) = hypotaurine(in) + chloride(in) + 2 Na(+)(in). Its activity is regulated as follows. GABA transport is inhibited by beta-alanine, 2,3-diaminopropionic acid and SNAP-5114. Functionally, mediates sodium- and chloride-dependent transport of gamma-aminobutyric acid (GABA). Mediates transport of beta-alanine. Can also mediate transport of taurine and hypotaurine. This is Sodium- and chloride-dependent GABA transporter 2 (SLC6A13) from Homo sapiens (Human).